The sequence spans 111 residues: Cell cycle protein GpsB (111 aa).

Positions 38–72 (IKDYEAFHKEFEQLKQQNARLKRELEEQKLAATQV) form a coiled coil.

This sequence belongs to the GpsB family. In terms of assembly, forms polymers through the coiled coil domains. Interacts with PBP1, MreC and EzrA.

The protein resides in the cytoplasm. Divisome component that associates with the complex late in its assembly, after the Z-ring is formed, and is dependent on DivIC and PBP2B for its recruitment to the divisome. Together with EzrA, is a key component of the system that regulates PBP1 localization during cell cycle progression. Its main role could be the removal of PBP1 from the cell pole after pole maturation is completed. Also contributes to the recruitment of PBP1 to the division complex. Not essential for septum formation. In Bacillus cereus (strain ATCC 10987 / NRS 248), this protein is Cell cycle protein GpsB.